The following is a 448-amino-acid chain: Probable alpha-galactosidase B (448 aa).

An N-terminal signal peptide occupies residues 1–23; sequence MSRFHLPLAAAVVLVSCLWSANA. Disulfide bonds link Cys-46-Cys-78 and Cys-128-Cys-158. Asp-156 functions as the Nucleophile in the catalytic mechanism. Residues Asn-163 and Asn-181 are each glycosylated (N-linked (GlcNAc...) asparagine). Residue 226–230 participates in substrate binding; it reads EWGQA. A glycan (N-linked (GlcNAc...) asparagine) is linked at Asn-237. Residue Asp-248 is the Proton donor of the active site.

Belongs to the glycosyl hydrolase 27 family.

Its subcellular location is the secreted. The catalysed reaction is Hydrolysis of terminal, non-reducing alpha-D-galactose residues in alpha-D-galactosides, including galactose oligosaccharides, galactomannans and galactolipids.. Hydrolyzes a variety of simple alpha-D-galactoside as well as more complex molecules such as oligosaccharides and polysaccharides. This Aspergillus clavatus (strain ATCC 1007 / CBS 513.65 / DSM 816 / NCTC 3887 / NRRL 1 / QM 1276 / 107) protein is Probable alpha-galactosidase B (aglB).